Here is a 375-residue protein sequence, read N- to C-terminus: Membrane progesterone receptor epsilon (375 aa).

Positions 1–39 (MPRRLQQRGAGVKGPPASTSRRSHPASASAPRSPPAATT) are disordered. Topologically, residues 1–84 (MPRRLQQRGA…VLKPTNETLN (84 aa)) are cytoplasmic. A compositionally biased stretch (low complexity) spans 15–39 (PPASTSRRSHPASASAPRSPPAATT). Residues 85-105 (FWTHFIPLLLFLSKFCRLFFL) form a helical membrane-spanning segment. The Extracellular portion of the chain corresponds to 106–114 (GGSDVPFHH). The chain crosses the membrane as a helical span at residues 115–135 (PWLLPLWCYASGVLLTFAMSC). At 136–160 (TAHVFSCLSLRLRAAFFYLDYASIS) the chain is on the cytoplasmic side. The chain crosses the membrane as a helical span at residues 161–181 (YYGFGSTVAYYYYLLPSLSLL). Topologically, residues 182–203 (DARVMTPYVQQRLGWHVDCTRL) are extracellular. Residues 204-224 (IAVYRALVLPVAFVLAVACTV) traverse the membrane as a helical segment. Topologically, residues 225-241 (ACCKSRTDWCSYPFALR) are cytoplasmic. The helical transmembrane segment at 242-262 (TFVFVMPLSMACPIMLESWLF) threads the bilayer. Topologically, residues 263–299 (DLRGENPTLFVHFYRRYFWLVVAAFFNVSKIPERIQP) are extracellular. The chain crosses the membrane as a helical span at residues 300-320 (GLFDIIGHSHQLFHIFTFLSI). At 321 to 341 (YDQVYYVEEGLRQFLQAPPAA) the chain is on the cytoplasmic side. The chain crosses the membrane as a helical span at residues 342-362 (PTFSGTVGYMLLLVVCLGLVI). Residues 363-375 (RKFLNSTEFCSKK) lie on the Extracellular side of the membrane.

This sequence belongs to the ADIPOR family. Homodimer.

The protein localises to the cell membrane. Functionally, plasma membrane progesterone (P4) receptor coupled to G proteins. Seems to act through a G(s) mediated pathway. May be involved in regulating rapid P4 signaling in the nervous system. Also binds dehydroepiandrosterone (DHEA), pregnanolone, pregnenolone and allopregnanolone. The protein is Membrane progesterone receptor epsilon of Mus musculus (Mouse).